Consider the following 432-residue polypeptide: Ribosome biogenesis protein WDR12 homolog (432 aa).

The interval 13-97 (LQIRLVALNK…ESVIEVVYFQ (85 aa)) is ubiquitin-like (UBL) domain. WD repeat units follow at residues 109 to 146 (LHSD…YAIF), 148 to 190 (GHES…KSVE), 197 to 236 (GHTQ…KDDD), 265 to 303 (GHTD…NKSD), 305 to 345 (NVNK…DQTV), 352 to 392 (SHKN…APLY), and 396 to 432 (GHED…AQRS).

The protein belongs to the WD repeat WDR12/YTM1 family.

It localises to the nucleus. The protein localises to the nucleolus. It is found in the nucleoplasm. In terms of biological role, required for maturation of ribosomal RNAs and formation of the large ribosomal subunit. The protein is Ribosome biogenesis protein WDR12 homolog of Trichoplax adhaerens (Trichoplax reptans).